The primary structure comprises 291 residues: MFIIELIKGIILGVVEGLTEFAPVSSTGHMILVDDMWLKSSEFLGSQSAFTFKIVIQLGSVFAAAWVFRERFLEILHIGKHKHVEGENDQQRRSKPRRLNLLHVLVGMVPAGILGLLFDDFIEEHLFSVPTVMIGLFVGAIYMIIADKYSVKVKNPQTVDQINYFQAFVIGISQAVAMWPGFSRSGSTISTGVLMKLNHKAASDFTFIMAVPIMLAASGLSLLKHYQDIQIADIPFYILGFLAAFTVGLIAIKTFLHLINKIKLIPFAIYRIVLVIFIAILYFGFGIGKGI.

Helical transmembrane passes span 1 to 21, 48 to 68, 102 to 122, 126 to 146, 162 to 182, 203 to 223, 231 to 251, and 267 to 287; these read MFII…LTEF, SAFT…AWVF, LHVL…DDFI, LFSV…MIIA, INYF…WPGF, SDFT…LSLL, IADI…GLIA, and FAIY…GFGI.

This sequence belongs to the UppP family.

The protein resides in the cell membrane. It catalyses the reaction di-trans,octa-cis-undecaprenyl diphosphate + H2O = di-trans,octa-cis-undecaprenyl phosphate + phosphate + H(+). In terms of biological role, catalyzes the dephosphorylation of undecaprenyl diphosphate (UPP). Confers resistance to bacitracin. This is Undecaprenyl-diphosphatase from Staphylococcus aureus (strain Mu3 / ATCC 700698).